The sequence spans 308 residues: uncharacterized protein (308 aa).

The N-terminal stretch at 1-19 (MKLLLILILIINNYNLCLS) is a signal peptide. Residues Asn-25 and Asn-300 are each glycosylated (N-linked (GlcNAc...) asparagine).

The protein resides in the secreted. This is an uncharacterized protein from Dictyostelium discoideum (Social amoeba).